A 1140-amino-acid chain; its full sequence is Eukaryotic translation initiation factor 3 subunit A (1140 aa).

The region spanning 319-502 is the PCI domain; that stretch reads LQRMAAHVLL…NSIYFGTDLT (184 aa). 3 stretches are compositionally biased toward basic and acidic residues: residues 589–624, 830–900, and 921–984; these read QNNA…EERE, AAEE…RGGD, and ERND…EPDS. Disordered stretches follow at residues 589–632 and 830–1140; these read QNNA…QNEI and AAEE…VKRR. Over residues 987 to 998 the composition is skewed to low complexity; the sequence is AAGAKDAGGAPA. 3 stretches are compositionally biased toward basic and acidic residues: residues 999–1050, 1058–1086, and 1109–1130; these read SRDD…EPQR, DAPR…RGDQ, and PRDE…KGGD.

The protein belongs to the eIF-3 subunit A family. Component of the eukaryotic translation initiation factor 3 (eIF-3) complex. The eIF-3 complex interacts with pix.

Its subcellular location is the cytoplasm. In terms of biological role, RNA-binding component of the eukaryotic translation initiation factor 3 (eIF-3) complex, which is involved in protein synthesis of a specialized repertoire of mRNAs and, together with other initiation factors, stimulates binding of mRNA and methionyl-tRNAi to the 40S ribosome. The eIF-3 complex specifically targets and initiates translation of a subset of mRNAs involved in cell proliferation. The protein is Eukaryotic translation initiation factor 3 subunit A of Drosophila ananassae (Fruit fly).